A 1155-amino-acid polypeptide reads, in one-letter code: DNA-directed RNA polymerase subunit beta (1155 aa).

This sequence belongs to the RNA polymerase beta chain family. The RNAP catalytic core consists of 2 alpha, 1 beta, 1 beta' and 1 omega subunit. When a sigma factor is associated with the core the holoenzyme is formed, which can initiate transcription.

The catalysed reaction is RNA(n) + a ribonucleoside 5'-triphosphate = RNA(n+1) + diphosphate. Its function is as follows. DNA-dependent RNA polymerase catalyzes the transcription of DNA into RNA using the four ribonucleoside triphosphates as substrates. This is DNA-directed RNA polymerase subunit beta from Borrelia duttonii (strain Ly).